Consider the following 309-residue polypeptide: 4-hydroxy-3-methylbut-2-enyl diphosphate reductase (309 aa).

Residue Cys-12 participates in [4Fe-4S] cluster binding. (2E)-4-hydroxy-3-methylbut-2-enyl diphosphate-binding residues include His-43 and His-77. Dimethylallyl diphosphate contacts are provided by His-43 and His-77. Isopentenyl diphosphate is bound by residues His-43 and His-77. Cys-99 contributes to the [4Fe-4S] cluster binding site. Residue His-127 coordinates (2E)-4-hydroxy-3-methylbut-2-enyl diphosphate. Residue His-127 coordinates dimethylallyl diphosphate. An isopentenyl diphosphate-binding site is contributed by His-127. Glu-129 serves as the catalytic Proton donor. Thr-167 is a (2E)-4-hydroxy-3-methylbut-2-enyl diphosphate binding site. Cys-197 is a [4Fe-4S] cluster binding site. Ser-225, Ser-226, Asn-227, and Ser-269 together coordinate (2E)-4-hydroxy-3-methylbut-2-enyl diphosphate. Dimethylallyl diphosphate-binding residues include Ser-225, Ser-226, Asn-227, and Ser-269. The isopentenyl diphosphate site is built by Ser-225, Ser-226, Asn-227, and Ser-269.

This sequence belongs to the IspH family. It depends on [4Fe-4S] cluster as a cofactor.

The catalysed reaction is isopentenyl diphosphate + 2 oxidized [2Fe-2S]-[ferredoxin] + H2O = (2E)-4-hydroxy-3-methylbut-2-enyl diphosphate + 2 reduced [2Fe-2S]-[ferredoxin] + 2 H(+). The enzyme catalyses dimethylallyl diphosphate + 2 oxidized [2Fe-2S]-[ferredoxin] + H2O = (2E)-4-hydroxy-3-methylbut-2-enyl diphosphate + 2 reduced [2Fe-2S]-[ferredoxin] + 2 H(+). It participates in isoprenoid biosynthesis; dimethylallyl diphosphate biosynthesis; dimethylallyl diphosphate from (2E)-4-hydroxy-3-methylbutenyl diphosphate: step 1/1. The protein operates within isoprenoid biosynthesis; isopentenyl diphosphate biosynthesis via DXP pathway; isopentenyl diphosphate from 1-deoxy-D-xylulose 5-phosphate: step 6/6. In terms of biological role, catalyzes the conversion of 1-hydroxy-2-methyl-2-(E)-butenyl 4-diphosphate (HMBPP) into a mixture of isopentenyl diphosphate (IPP) and dimethylallyl diphosphate (DMAPP). Acts in the terminal step of the DOXP/MEP pathway for isoprenoid precursor biosynthesis. This is 4-hydroxy-3-methylbut-2-enyl diphosphate reductase from Wolbachia pipientis wMel.